The primary structure comprises 1056 residues: RNA cytidine acetyltransferase (1056 aa).

286–295 contributes to the ATP binding site; it reads GRGKSAALGI. Polar residues predominate over residues 433–446; that stretch reads QNNTSGRESTQTAV. The tract at residues 433-463 is disordered; sequence QNNTSGRESTQTAVVSRDNKEKDSHLHSQSR. Residues 449–463 show a composition bias toward basic and acidic residues; sequence RDNKEKDSHLHSQSR. Residue Arg-475 coordinates ATP. One can recognise an N-acetyltransferase domain in the interval 566 to 706; it reads VLLPPIDPKD…VKLRDAKTLP (141 aa). Acetyl-CoA contacts are provided by residues 638–640, 645–651, and Asn-739; these read IAT and ASMGYGS. A phosphoserine mark is found at Ser-1001, Ser-1007, and Ser-1010.

This sequence belongs to the RNA cytidine acetyltransferase family. NAT10 subfamily. Interacts with TAN1. Associates with 90S pre-ribosomal particles.

Its subcellular location is the nucleus. It localises to the nucleolus. It carries out the reaction a cytidine in 18S rRNA + acetyl-CoA + ATP + H2O = an N(4)-acetylcytidine in 18S rRNA + ADP + phosphate + CoA + H(+). It catalyses the reaction a cytidine in tRNA + acetyl-CoA + ATP + H2O = an N(4)-acetylcytidine in tRNA + ADP + phosphate + CoA + H(+). Its function is as follows. RNA cytidine acetyltransferase with specificity toward both 18S rRNA and tRNAs. Catalyzes the formation of N(4)-acetylcytidine (ac4C) at positions 1280 and 1773 in 18S rRNA. Required for early nucleolar cleavages of precursor rRNA at sites A0, A1 and A2 during 18S rRNA synthesis. Catalyzes the formation of ac4C at position 12 in serine and leucine tRNAs. Requires the tRNA-binding adapter protein TAN1 for full tRNA acetyltransferase activity but not for 18S rRNA acetylation. The protein is RNA cytidine acetyltransferase of Saccharomyces cerevisiae (strain ATCC 204508 / S288c) (Baker's yeast).